The sequence spans 315 residues: MSQPTPAVRTFQDLILALQQYWAEQGCVVLQPYDMEVGAGTFHTATFLRAVGPETWNAAYVQPSRRPTDGRYGENPNRLQHYYQFQVILKPNPDNFQELYLGSLKHIGLDPLVHDVRFVEDNWESPTLGAWGLGWEIWLNGMEVSQFTYFQQVGGIECYPVTGEITYGLERLAMYQQGVDSVYDLVWADGPFGKVTYGDVFHQNEVEQSTYNFEHANVDKLFELFDFYESEAARLIELELPLPGYEMVLKASHTFNLLDARRAISVTARQQYILRVRTLARSVAQAYLQARARLGFPMAPPDLRDEVLAKLEAAQ.

Belongs to the class-II aminoacyl-tRNA synthetase family. As to quaternary structure, tetramer of two alpha and two beta subunits.

It is found in the cytoplasm. It catalyses the reaction tRNA(Gly) + glycine + ATP = glycyl-tRNA(Gly) + AMP + diphosphate. The protein is Glycine--tRNA ligase alpha subunit of Pseudomonas syringae pv. tomato (strain ATCC BAA-871 / DC3000).